The primary structure comprises 64 residues: Beta-toxin Tf1 (64 aa).

The 62-residue stretch at lysine 1–glycine 62 folds into the LCN-type CS-alpha/beta domain. Intrachain disulfides connect cysteine 11–cysteine 61, cysteine 15–cysteine 37, cysteine 23–cysteine 42, and cysteine 27–cysteine 44. Cysteine 61 is modified (cysteine amide).

The protein belongs to the long (4 C-C) scorpion toxin superfamily. Sodium channel inhibitor family. Beta subfamily. Expressed by the venom gland.

The protein resides in the secreted. Functionally, beta toxins bind voltage-independently at site-4 of sodium channels (Nav) and shift the voltage of activation toward more negative potentials thereby affecting sodium channel activation and promoting spontaneous and repetitive firing. The chain is Beta-toxin Tf1 from Tityus fasciolatus (Central Brazilian scorpion).